We begin with the raw amino-acid sequence, 145 residues long: Large ribosomal subunit protein uL13 (145 aa).

The disordered stretch occupies residues 72-91 (DKMYHRHSNHPGGLKSISAG).

This sequence belongs to the universal ribosomal protein uL13 family. Part of the 50S ribosomal subunit.

Its function is as follows. This protein is one of the early assembly proteins of the 50S ribosomal subunit, although it is not seen to bind rRNA by itself. It is important during the early stages of 50S assembly. This chain is Large ribosomal subunit protein uL13, found in Staphylococcus epidermidis (strain ATCC 12228 / FDA PCI 1200).